Consider the following 431-residue polypeptide: Enolase (431 aa).

Residue Gln-167 coordinates (2R)-2-phosphoglycerate. The Proton donor role is filled by Glu-209. Mg(2+) contacts are provided by Asp-246, Glu-289, and Asp-316. Residues Lys-341, Arg-370, Ser-371, and Lys-392 each contribute to the (2R)-2-phosphoglycerate site. Lys-341 functions as the Proton acceptor in the catalytic mechanism.

Belongs to the enolase family. As to quaternary structure, component of the RNA degradosome, a multiprotein complex involved in RNA processing and mRNA degradation. Requires Mg(2+) as cofactor.

The protein resides in the cytoplasm. It localises to the secreted. It is found in the cell surface. The catalysed reaction is (2R)-2-phosphoglycerate = phosphoenolpyruvate + H2O. It participates in carbohydrate degradation; glycolysis; pyruvate from D-glyceraldehyde 3-phosphate: step 4/5. Catalyzes the reversible conversion of 2-phosphoglycerate (2-PG) into phosphoenolpyruvate (PEP). It is essential for the degradation of carbohydrates via glycolysis. The protein is Enolase of Shewanella putrefaciens (strain CN-32 / ATCC BAA-453).